Reading from the N-terminus, the 939-residue chain is MKDYYTWTYPDVPENVAQELLQLENSMVVVGIVGRSKCERANKMQAFGMSPPMEHTPADGQVQCYYKRGTSCIFLHFETTYDEPILHRMIEDSMADHQNAFDFDHFYEQMRSRFVRMMLLALHTCHIIVYVETGPTFDPTLVTVFQLLKFSREQHLKQFLPQMLRDTPAAKLGEKSRLCAPRILFLFENFPSDELKTRENVSAYEFQTEDNIYEMLRHHHIFTNSSPSSLVALPNNKQFVYFNAHEELHPDYLLKAIDCLNKTMFKPDMREEEEDLEILELAPFEGFCKPFGPPGERDVEAQQYKRQHTAWHFLQRHIQDALHGCFDEGSFKQLPHLGQFQLLSFPEWQGCMDTLTQLLVENAKDTNFETNNEEYKNFLLNFEDSLNYEKKFWAHLCELGLKKGISSYKSSAPANYGSATHRKLLAEATIAFEEEGRGPPAQAALARMAAICLKHWQDGRQQCEKLSLRSQPCTLPKDVPHDKHNSGVIHISSCNCGRTQGRREDPFNLRQANYDFYELIAQICNLCVKVKQYQFPIFEPSVSDYRAAAFDAAFPMLNTGKICTPQGEDENEDGETEEADEDTEEKEQAEGDNCSQQLSPTFGSDLNMSIAGFGASLNESQESSEQLSGSEHESPNSGTSSADTENELVLQIKEPARKESTPTGGFSTSTTEYLPGLVHTVSDFGLLPLFPSWSLACVGPSSIYSHNTGLQEHFQSGFLSGANFLLPWDVLLRLVHANKHHQQHHHNMHLQQHPGKKQQRWKKQGDRLSIKIFVGMEYECSRGHRFMMCAPDRVLRGGADIERDTCNKVVHSNMPLYYPCPCRSQSNYLAQLMRIHVVTPKAPVNIIVDPKVCVGKYTFTLGTIIPPRLSQSAYWILRLPFVYQGDNVMIAPPEKLDPDNPMAGGYLLPGMFGVAETDANMDLSNPSRMGSTAGTFIRI.

Disordered stretches follow at residues 561 to 600 (KICT…QLSP) and 617 to 645 (LNES…ADTE). The span at 567–587 (GEDENEDGETEEADEDTEEKE) shows a compositional bias: acidic residues. The segment covering 617 to 629 (LNESQESSEQLSG) has biased composition (low complexity).

Belongs to the SMG8 family.

Involved in nonsense-mediated decay (NMD) of mRNAs containing premature stop codons. Probable component of kinase complex containing nonC and recruited to stalled ribosomes. This is Nonsense-mediated mRNA decay factor SMG8 from Drosophila ananassae (Fruit fly).